A 337-amino-acid chain; its full sequence is Phenylalanine--tRNA ligase alpha subunit (337 aa).

Position 258 (Glu258) interacts with Mg(2+).

The protein belongs to the class-II aminoacyl-tRNA synthetase family. Phe-tRNA synthetase alpha subunit type 1 subfamily. Tetramer of two alpha and two beta subunits. It depends on Mg(2+) as a cofactor.

The protein localises to the cytoplasm. It catalyses the reaction tRNA(Phe) + L-phenylalanine + ATP = L-phenylalanyl-tRNA(Phe) + AMP + diphosphate + H(+). In Burkholderia thailandensis (strain ATCC 700388 / DSM 13276 / CCUG 48851 / CIP 106301 / E264), this protein is Phenylalanine--tRNA ligase alpha subunit.